Reading from the N-terminus, the 126-residue chain is Small ribosomal subunit protein uS12 (126 aa).

The span at 1 to 16 (MPTVNQLVRQGRTMNK) shows a compositional bias: polar residues. The interval 1–24 (MPTVNQLVRQGRTMNKTKTKSPAL) is disordered. 3-methylthioaspartic acid is present on aspartate 89.

Belongs to the universal ribosomal protein uS12 family. As to quaternary structure, part of the 30S ribosomal subunit. Contacts proteins S8 and S17. May interact with IF1 in the 30S initiation complex.

Its function is as follows. With S4 and S5 plays an important role in translational accuracy. Interacts with and stabilizes bases of the 16S rRNA that are involved in tRNA selection in the A site and with the mRNA backbone. Located at the interface of the 30S and 50S subunits, it traverses the body of the 30S subunit contacting proteins on the other side and probably holding the rRNA structure together. The combined cluster of proteins S8, S12 and S17 appears to hold together the shoulder and platform of the 30S subunit. In Elusimicrobium minutum (strain Pei191), this protein is Small ribosomal subunit protein uS12.